The following is a 648-amino-acid chain: Macrolide export ATP-binding/permease protein MacB 1 (648 aa).

The ABC transporter domain occupies 6-244; it reads LQLSGIRRHF…PAPTTSRADT (239 aa). 42–49 is a binding site for ATP; it reads GASGSGKS. Residues 222-248 are disordered; the sequence is VVADRRREPTPPSPAPTTSRADTGGRG. The next 4 membrane-spanning stretches (helical) occupy residues 273–293, 521–541, 578–598, and 613–633; these read FLTM…VALG, LTLL…IGVM, LVCL…GVLF, and AVLM…FFPA.

The protein belongs to the ABC transporter superfamily. Macrolide exporter (TC 3.A.1.122) family. As to quaternary structure, homodimer. Part of the tripartite efflux system MacAB-TolC, which is composed of an inner membrane transporter, MacB, a periplasmic membrane fusion protein, MacA, and an outer membrane component, TolC. The complex forms a large protein conduit and can translocate molecules across both the inner and outer membranes. Interacts with MacA.

It is found in the cell inner membrane. Part of the tripartite efflux system MacAB-TolC. MacB is a non-canonical ABC transporter that contains transmembrane domains (TMD), which form a pore in the inner membrane, and an ATP-binding domain (NBD), which is responsible for energy generation. Confers resistance against macrolides. In Aeromonas hydrophila subsp. hydrophila (strain ATCC 7966 / DSM 30187 / BCRC 13018 / CCUG 14551 / JCM 1027 / KCTC 2358 / NCIMB 9240 / NCTC 8049), this protein is Macrolide export ATP-binding/permease protein MacB 1.